The following is a 331-amino-acid chain: Quinone oxidoreductase (331 aa).

Alanine 2 is modified (N-acetylalanine). The residue at position 23 (lysine 23) is an N6-acetyllysine. Position 35 is a phosphoserine (serine 35). Residues tyrosine 53, 158 to 161, and glycine 181 each bind NADP(+); that span reads SGGV. N6-acetyllysine is present on lysine 186. NADP(+)-binding positions include histidine 200, asparagine 231, 248-251, and 271-273; these read VGCR and VSL. Lysine 298 is subject to N6-succinyllysine.

The protein belongs to the zinc-containing alcohol dehydrogenase family. Quinone oxidoreductase subfamily. In terms of assembly, homotetramer.

It is found in the cytoplasm. The catalysed reaction is 2 a quinone + NADPH + H(+) = 2 a 1,4-benzosemiquinone + NADP(+). Functionally, does not have alcohol dehydrogenase activity. Binds NADP and acts through a one-electron transfer process. Orthoquinones, such as 1,2-naphthoquinone or 9,10-phenanthrenequinone, are the best substrates (in vitro). May act in the detoxification of xenobiotics. Interacts with (AU)-rich elements (ARE) in the 3'-UTR of target mRNA species and enhances their stability. NADPH binding interferes with mRNA binding. The sequence is that of Quinone oxidoreductase (Cryz) from Mus musculus (Mouse).